The following is a 400-amino-acid chain: Probable peptidoglycan glycosyltransferase FtsW (400 aa).

Topologically, residues 1–24 (MSTGSLPLGLPSRDSLDGLRNSVD) are cytoplasmic. Residues 25-45 (LPLLAAAALLLGLGLIMVASA) form a helical membrane-spanning segment. The Periplasmic segment spans residues 46 to 63 (SMDLGERYYGNTWHFFQR). The helical transmembrane segment at 64–84 (QVLFAAIGLALATVMWAIPLE) threads the bilayer. The Cytoplasmic segment spans residues 85 to 88 (RWER). A helical membrane pass occupies residues 89-109 (AGPWLLILVMVLLIAVLLPGV). Over 110-118 (GRTVNGATR) the chain is Periplasmic. Residues 119 to 139 (WIPIGMFNLQVAEPVKLLVVM) traverse the membrane as a helical segment. The Cytoplasmic portion of the chain corresponds to 140-153 (YLAGYIVRHYSALR). Residues 154-174 (LHLRGFVRPLVVLGFGTVLLL) form a helical membrane-spanning segment. The Periplasmic portion of the chain corresponds to 175–177 (LQP). Residues 178-198 (DFGGAAIMLAIGMGMLFLAGA) form a helical membrane-spanning segment. Lys199 is a topological domain (cytoplasmic). Residues 200 to 220 (LWQFAALGATIAVGMAFVAVA) form a helical membrane-spanning segment. Over 221–278 (APYRVARLTAFLDPWQDPFATGFQLTQSLIAIGSGGWFGTGLGNSVQKLFYLPEAHND) the chain is Periplasmic. The chain crosses the membrane as a helical span at residues 279–299 (FLFAVFAEEFGFIGVLALIAL). At 300-324 (FAVVVWRCVKIGLWAERAGHAFGSH) the chain is on the cytoplasmic side. A helical transmembrane segment spans residues 325–345 (LAFGVAIWLALQSALNLAVNM). The Periplasmic portion of the chain corresponds to 346-354 (GLLPTKGMT). The helical transmembrane segment at 355–375 (LPFLSYGGSSLIVTLMAIGLV) threads the bilayer. Over 376-400 (MRVYREAQIPAPRQSTPPRRKRGQA) the chain is Cytoplasmic.

Belongs to the SEDS family. FtsW subfamily.

The protein resides in the cell inner membrane. The enzyme catalyses [GlcNAc-(1-&gt;4)-Mur2Ac(oyl-L-Ala-gamma-D-Glu-L-Lys-D-Ala-D-Ala)](n)-di-trans,octa-cis-undecaprenyl diphosphate + beta-D-GlcNAc-(1-&gt;4)-Mur2Ac(oyl-L-Ala-gamma-D-Glu-L-Lys-D-Ala-D-Ala)-di-trans,octa-cis-undecaprenyl diphosphate = [GlcNAc-(1-&gt;4)-Mur2Ac(oyl-L-Ala-gamma-D-Glu-L-Lys-D-Ala-D-Ala)](n+1)-di-trans,octa-cis-undecaprenyl diphosphate + di-trans,octa-cis-undecaprenyl diphosphate + H(+). It functions in the pathway cell wall biogenesis; peptidoglycan biosynthesis. Functionally, peptidoglycan polymerase that is essential for cell division. In Thioalkalivibrio sp. (strain K90mix), this protein is Probable peptidoglycan glycosyltransferase FtsW.